We begin with the raw amino-acid sequence, 225 residues long: Protein-L-isoaspartate O-methyltransferase (225 aa).

The active site involves serine 75.

It belongs to the methyltransferase superfamily. L-isoaspartyl/D-aspartyl protein methyltransferase family.

It localises to the cytoplasm. It carries out the reaction [protein]-L-isoaspartate + S-adenosyl-L-methionine = [protein]-L-isoaspartate alpha-methyl ester + S-adenosyl-L-homocysteine. Functionally, catalyzes the methyl esterification of L-isoaspartyl residues in peptides and proteins that result from spontaneous decomposition of normal L-aspartyl and L-asparaginyl residues. It plays a role in the repair and/or degradation of damaged proteins. This is Protein-L-isoaspartate O-methyltransferase from Stenotrophomonas maltophilia (strain K279a).